We begin with the raw amino-acid sequence, 275 residues long: Bis(5'-nucleosyl)-tetraphosphatase, symmetrical (275 aa).

The protein belongs to the Ap4A hydrolase family.

The catalysed reaction is P(1),P(4)-bis(5'-adenosyl) tetraphosphate + H2O = 2 ADP + 2 H(+). Its function is as follows. Hydrolyzes diadenosine 5',5'''-P1,P4-tetraphosphate to yield ADP. The sequence is that of Bis(5'-nucleosyl)-tetraphosphatase, symmetrical from Haemophilus influenzae (strain PittEE).